The chain runs to 1217 residues: Valine--tRNA ligase (1217 aa).

The 129-residue stretch at 27 to 155 (NAKQQSQVWQ…ISLCEKMVPV (129 aa)) folds into the GST C-terminal domain. A 'HIGH' region motif is present at residues 293–303 (PNVTGSLHLGH). Residues 809–813 (KMSKS) carry the 'KMSKS' region motif. K812 provides a ligand contact to ATP.

The protein belongs to the class-I aminoacyl-tRNA synthetase family.

The enzyme catalyses tRNA(Val) + L-valine + ATP = L-valyl-tRNA(Val) + AMP + diphosphate. This chain is Valine--tRNA ligase (vars1), found in Takifugu rubripes (Japanese pufferfish).